We begin with the raw amino-acid sequence, 328 residues long: MFIIKSMLYRLMQMIVVLFVISTLTFILMKLSPGNPVDKILHLDVAQVSTEQINATKDKLGLNDSLLVQWWHWMNHLLHFNLGKSFESKEPVTQILFNYAPITLLISFSTLVVSLCISIPLGIIAAKRFHKWTDKVIRVISTLSISLPAFFIGIILLFIVTNLMNIDSVILSQFILPVITLSLGMCAYIIRLVRSNLLMLLQSNIVQASRLRGMNERYILIHDLLKPTILPIIPLLGISLGSLIGGTVVIENLFDIPGIGYLLMDSIKSRDYPVIQGCVLFIGFFVVIINTIADLLTLLLDPKQRLQLGNPKIKTNTPLISVSSDRHA.

Transmembrane regions (helical) follow at residues leucine 11 to leucine 31, leucine 104 to isoleucine 124, valine 139 to isoleucine 159, isoleucine 170 to isoleucine 190, isoleucine 229 to valine 249, and valine 279 to leucine 299. The ABC transmembrane type-1 domain maps to alanine 100–threonine 297.

It belongs to the binding-protein-dependent transport system permease family. OppBC subfamily. In terms of assembly, the complex is composed of two ATP-binding proteins (NikD and NikE), two transmembrane proteins (NikB and NikC) and a solute-binding protein (NikA).

It is found in the cell membrane. Its function is as follows. Part of the ABC transporter complex NikABCDE (Opp2) involved in nickel import. Probably responsible for the translocation of the substrate across the membrane. The protein is Nickel import system permease protein NikB of Staphylococcus aureus (strain MSSA476).